The following is a 213-amino-acid chain: Protein arginine N-methyltransferase SFM1 (213 aa).

S204 and S207 each carry phosphoserine.

Belongs to the class IV-like SAM-binding methyltransferase superfamily. Protein arginine N-methyltransferase SFM1 family.

It is found in the cytoplasm. In terms of biological role, S-adenosyl-L-methionine-dependent protein-arginine N-methyltransferase that monomethylates ribosomal protein S3 (RPS3) at 'Arg-146'. This chain is Protein arginine N-methyltransferase SFM1, found in Saccharomyces cerevisiae (strain ATCC 204508 / S288c) (Baker's yeast).